The chain runs to 205 residues: uncharacterized protein (205 aa).

The region spanning 26–129 is the HD domain; it reads DWHHVSRVAD…VQDADRLDAI (104 aa).

This is an uncharacterized protein from Bacillus subtilis (strain 168).